The following is a 141-amino-acid chain: Large ribosomal subunit protein uL11B/uL11C (141 aa).

Belongs to the universal ribosomal protein uL11 family. As to quaternary structure, part of the ribosomal stalk of the 50S ribosomal subunit. Interacts with L10 and the large rRNA to form the base of the stalk. L10 forms an elongated spine to which L12 dimers bind in a sequential fashion forming a multimeric L10(L12)X complex. In terms of processing, one or more lysine residues are methylated.

Functionally, forms part of the ribosomal stalk which helps the ribosome interact with GTP-bound translation factors. This is Large ribosomal subunit protein uL11B/uL11C from Bacillus cereus (strain ATCC 14579 / DSM 31 / CCUG 7414 / JCM 2152 / NBRC 15305 / NCIMB 9373 / NCTC 2599 / NRRL B-3711).